A 363-amino-acid polypeptide reads, in one-letter code: UDP-N-acetylenolpyruvoylglucosamine reductase (363 aa).

The region spanning 25-201 (IGPVARRMLT…RSAPVRYREL (177 aa)) is the FAD-binding PCMH-type domain. Arg168 is an active-site residue. Ser249 functions as the Proton donor in the catalytic mechanism. Glu352 is an active-site residue.

The protein belongs to the MurB family. FAD is required as a cofactor.

The protein resides in the cytoplasm. The catalysed reaction is UDP-N-acetyl-alpha-D-muramate + NADP(+) = UDP-N-acetyl-3-O-(1-carboxyvinyl)-alpha-D-glucosamine + NADPH + H(+). Its pathway is cell wall biogenesis; peptidoglycan biosynthesis. Cell wall formation. This Mycolicibacterium smegmatis (strain ATCC 700084 / mc(2)155) (Mycobacterium smegmatis) protein is UDP-N-acetylenolpyruvoylglucosamine reductase.